A 331-amino-acid chain; its full sequence is Ornithine carbamoyltransferase, catabolic (331 aa).

Residues 57 to 60 (STRT), Gln-82, Arg-106, and 133 to 136 (HPTQ) each bind carbamoyl phosphate. Residues Asn-166, Asp-230, and 234-235 (SM) contribute to the L-ornithine site. Carbamoyl phosphate contacts are provided by residues 272-273 (CL) and Arg-317.

Belongs to the aspartate/ornithine carbamoyltransferase superfamily. OTCase family.

Its subcellular location is the cytoplasm. The catalysed reaction is carbamoyl phosphate + L-ornithine = L-citrulline + phosphate + H(+). Its pathway is amino-acid degradation; L-arginine degradation via ADI pathway; carbamoyl phosphate from L-arginine: step 2/2. Functionally, reversibly catalyzes the transfer of the carbamoyl group from carbamoyl phosphate (CP) to the N(epsilon) atom of ornithine (ORN) to produce L-citrulline. This Clostridium perfringens (strain ATCC 13124 / DSM 756 / JCM 1290 / NCIMB 6125 / NCTC 8237 / Type A) protein is Ornithine carbamoyltransferase, catabolic (arcB).